The primary structure comprises 817 residues: MAVTNEELKTAHKIVRRVSNIEAFDKSGVVFKGYQIWTNISPTIEEDPNVMFVKCVVQHGSNQDKLNVVQIDPPGSGTPYEIDVKSAWNCNSQVDPMSFGDIGLLNHTNTPCVLDFLKHRYLKNQIYTTACPLIVAINPYKDLGNTTDEWIRKYRDASDHTRLPPHIFSCAREALSNLHGVNKSQTIIVSGESGAGKTEATKQIMKYFASSKNGNMDLYIQTAIMAANPVLEAFGNAKTIRNNNSSRFGRFMQLAISHEGGIRNGSVVAFLLEKSRIITQDDNERSYHIFYQFLKGADSNMKSKFGLKGIKDYKLLNPNSPDVDGIDDVKDFQEVITSLKNMQLNDEQIEVIFSIIAGILTLGNVRIVEKTEAGLSDAAGIHNDDMETFKKACELMFLDPELVKRELLIKVTIAGGNRIEGRWNKNDAEVLKLSLCKAMYEKLFLWIIKNLNSRIEPEGGFKAFMGMLDIFGFEVFKNNSLEQLFINITNEMLQKNFVDIVFERESKLYRDEGISTAELNYTSNKEVISVLCERGKSVLSYLEDQCLAPGGSDEKFVNACVVNLKSNEKFIPAKVASNKNFIIQHTIGPIQYCSDNFLLKNKDVLRGELVEIILGSGNKVVSGLFEGQVIEKGKMAKGSLIGSQFLNQLTSLMTLINSTEPHFIRCIKPNENKKPLEWCEPKILIQLHALSILEALVLRQLGYSYRRTFDEFLYQFKFVDINTSENSSLDSREKCNKILKLSGLSDDMLKIGKTMVFLKQDGAKMLSKIQREKLVEWENCVSVIEAAIMKYKHKQNVENNVSSLMRVQAHIRKRMVA.

S19 is modified (phosphoserine). Residues 97–771 (MSFGDIGLLN…GAKMLSKIQR (675 aa)) enclose the Myosin motor domain. ATP is bound at residue 191-198 (GESGAGKT). Residues 661–671 (PHFIRCIKPNE) are actin-binding. The interval 773 to 817 (KLVEWENCVSVIEAAIMKYKHKQNVENNVSSLMRVQAHIRKRMVA) is tail.

It belongs to the TRAFAC class myosin-kinesin ATPase superfamily. Myosin family. Interacts with ACT1.

The protein localises to the cell membrane. Myosins are actin-based motor molecules with ATPase activity. Unconventional myosins serve in intracellular movements. Their highly divergent tails are presumed to bind to membranous compartments, which would be moved relative to actin filaments. The polypeptide is Myosin-A (Plasmodium yoelii yoelii).